The primary structure comprises 139 residues: MSVNYATLGDLKKGSYIVIDGEPCRIVEMSRAKTGKHGSAKAHVVAICVFSGQKKSLVAPVDTRVQIPVIEKRLGQVLADMGDMVQIMDLETYDTFEVEKPGGNEEEEQLAAKLQPGVTVEYWLIMGKPKIIRIRSSSS.

Lys36 is modified (hypusine).

The protein belongs to the eIF-5A family.

The protein localises to the cytoplasm. Functionally, functions by promoting the formation of the first peptide bond. The sequence is that of Translation initiation factor 5A (eif5a) from Aeropyrum pernix (strain ATCC 700893 / DSM 11879 / JCM 9820 / NBRC 100138 / K1).